Consider the following 142-residue polypeptide: Large ribosomal subunit protein uL13 (142 aa).

The protein belongs to the universal ribosomal protein uL13 family. Part of the 50S ribosomal subunit.

This protein is one of the early assembly proteins of the 50S ribosomal subunit, although it is not seen to bind rRNA by itself. It is important during the early stages of 50S assembly. This is Large ribosomal subunit protein uL13 from Ruthia magnifica subsp. Calyptogena magnifica.